Reading from the N-terminus, the 547-residue chain is MAAKDVKFGNDARVKMLEGVNVLADAVKVTLGPKGRNVVLDKSFGAPTITKDGVSVAREIELEDKFQNMGAQMVKEVASKANDAAGDGTTTATVLAQAIVNEGLKAVAAGMNPMDLKRGIDKAVAAAVEQLKELSVECNDTKAIAQVGTISANSDASVGNIIAEAMERVGRDGVITVEEGQALQDELDVVEGMQFDRGYLSPYFINNQEAGSVELENPFILLVDKKISNIRELLPTLEAVAKASRPLLIIAEDVEGEALATLVVNNMRGIVKVAAVKAPGFGDRRKAMLQDIAILTGGTVISEEIGLELEKVTLEDLGQAKRVSITKENSTIIDGAGEEAMIQGRVAQIRQQIEDATSDYDKEKLQERVAKLAGGVAVIKVGAATEVEMKEKKDRVEDALHATRAAVEEGVVAGGGVALIRAASKIVDLEGDNEEQNVGIRVALRAMEAPIRQITKNAGDEDSVVANNVKAGEGSYGYNAATGEYGDMLEMGILDPTKVTRSALQFAASVAGLMITTEAMVTDLPQKESAGMPDMGGMGGMGGMGMM.

ATP is bound by residues threonine 30–proline 33, lysine 51, aspartate 87–threonine 91, glycine 415, asparagine 479–alanine 481, and aspartate 495.

The protein belongs to the chaperonin (HSP60) family. As to quaternary structure, forms a cylinder of 14 subunits composed of two heptameric rings stacked back-to-back. Interacts with the co-chaperonin GroES.

It is found in the cytoplasm. The catalysed reaction is ATP + H2O + a folded polypeptide = ADP + phosphate + an unfolded polypeptide.. In terms of biological role, together with its co-chaperonin GroES, plays an essential role in assisting protein folding. The GroEL-GroES system forms a nano-cage that allows encapsulation of the non-native substrate proteins and provides a physical environment optimized to promote and accelerate protein folding. The protein is Chaperonin GroEL 1 of Vibrio parahaemolyticus serotype O3:K6 (strain RIMD 2210633).